A 212-amino-acid chain; its full sequence is Methylthioribulose-1-phosphate dehydratase (212 aa).

2 residues coordinate Zn(2+): H97 and H99.

The protein belongs to the aldolase class II family. MtnB subfamily. In terms of assembly, homotetramer. Zn(2+) is required as a cofactor.

It carries out the reaction 5-(methylsulfanyl)-D-ribulose 1-phosphate = 5-methylsulfanyl-2,3-dioxopentyl phosphate + H2O. It functions in the pathway amino-acid biosynthesis; L-methionine biosynthesis via salvage pathway; L-methionine from S-methyl-5-thio-alpha-D-ribose 1-phosphate: step 2/6. Functionally, catalyzes the dehydration of methylthioribulose-1-phosphate (MTRu-1-P) into 2,3-diketo-5-methylthiopentyl-1-phosphate (DK-MTP-1-P). The chain is Methylthioribulose-1-phosphate dehydratase from Bacillus mycoides (strain KBAB4) (Bacillus weihenstephanensis).